Consider the following 162-residue polypeptide: NRR repressor homolog 3 (162 aa).

The interval M1–D80 is disordered. Residues T7 to A24 are compositionally biased toward polar residues. A compositionally biased stretch (basic residues) spans P37 to D46. The span at G69–D80 shows a compositional bias: basic and acidic residues.

This sequence belongs to the NPR1-interactor family. Interacts with NPR1/NH1. Interacts with NPR3/NH3.

It localises to the nucleus. Binds to and represses NPR1/NH1-mediated transcriptional activation of LG2 in vitro. The protein is NRR repressor homolog 3 of Oryza sativa subsp. japonica (Rice).